The following is a 211-amino-acid chain: Glycerol-3-phosphate acyltransferase (211 aa).

5 helical membrane-spanning segments follow: residues 8 to 28 (YCLA…LILT), 84 to 104 (LALP…WLGF), 116 to 136 (VLLA…FAVA), 145 to 165 (AALC…GMGL), and 170 to 190 (LAQS…LVFL).

This sequence belongs to the PlsY family. Probably interacts with PlsX.

It localises to the cell inner membrane. It carries out the reaction an acyl phosphate + sn-glycerol 3-phosphate = a 1-acyl-sn-glycero-3-phosphate + phosphate. Its pathway is lipid metabolism; phospholipid metabolism. Its function is as follows. Catalyzes the transfer of an acyl group from acyl-phosphate (acyl-PO(4)) to glycerol-3-phosphate (G3P) to form lysophosphatidic acid (LPA). This enzyme utilizes acyl-phosphate as fatty acyl donor, but not acyl-CoA or acyl-ACP. This is Glycerol-3-phosphate acyltransferase from Granulibacter bethesdensis (strain ATCC BAA-1260 / CGDNIH1).